The chain runs to 184 residues: ATP synthase subunit delta (184 aa).

It belongs to the ATPase delta chain family. As to quaternary structure, F-type ATPases have 2 components, F(1) - the catalytic core - and F(0) - the membrane proton channel. F(1) has five subunits: alpha(3), beta(3), gamma(1), delta(1), epsilon(1). CF(0) has four main subunits: a(1), b(1), b'(1) and c(10-14). The alpha and beta chains form an alternating ring which encloses part of the gamma chain. F(1) is attached to F(0) by a central stalk formed by the gamma and epsilon chains, while a peripheral stalk is formed by the delta, b and b' chains.

It localises to the cellular thylakoid membrane. In terms of biological role, f(1)F(0) ATP synthase produces ATP from ADP in the presence of a proton or sodium gradient. F-type ATPases consist of two structural domains, F(1) containing the extramembraneous catalytic core and F(0) containing the membrane proton channel, linked together by a central stalk and a peripheral stalk. During catalysis, ATP synthesis in the catalytic domain of F(1) is coupled via a rotary mechanism of the central stalk subunits to proton translocation. Its function is as follows. This protein is part of the stalk that links CF(0) to CF(1). It either transmits conformational changes from CF(0) to CF(1) or is implicated in proton conduction. The sequence is that of ATP synthase subunit delta from Synechococcus sp. (strain PCC 6716).